The primary structure comprises 330 residues: DNA-directed RNA polymerase subunit alpha (330 aa).

Residues 1–235 (MQGSVTEFLK…EQLEAFVDLR (235 aa)) are alpha N-terminal domain (alpha-NTD). The alpha C-terminal domain (alpha-CTD) stretch occupies residues 249–330 (FDPILLRPVD…WPPASIADNE (82 aa)).

This sequence belongs to the RNA polymerase alpha chain family. Homodimer. The RNAP catalytic core consists of 2 alpha, 1 beta, 1 beta' and 1 omega subunit. When a sigma factor is associated with the core the holoenzyme is formed, which can initiate transcription.

The enzyme catalyses RNA(n) + a ribonucleoside 5'-triphosphate = RNA(n+1) + diphosphate. DNA-dependent RNA polymerase catalyzes the transcription of DNA into RNA using the four ribonucleoside triphosphates as substrates. The protein is DNA-directed RNA polymerase subunit alpha of Yersinia enterocolitica serotype O:8 / biotype 1B (strain NCTC 13174 / 8081).